Reading from the N-terminus, the 419-residue chain is MINRFSIEKVKGLEIIDSRGNPTIRVFVRTNDGVESFGDAPAGASKGTREAIEVRDENGLTVKRAVDIANYIIDPALHGIDVREQGIIDKILIDIDSTENKSKLGGNTIIATSIAALKTASKALGLEVFKYIAGPRLPKIPIPLLNIINGGLHAGNKLKIQEFIILPIKFNTFKEAFFAAIEVYRNLKGLISERYGKIYTAVGDEGGFSPPLEETREALDLIYTSINNAGYQGKIYMGMDAAASDFYDPKKEKYIIDGKELNPTQLLEFYLDLAKEYPIVYLEDPFEENSFDMFGELQNKLNSTIVTGDDLYTTNIKYLKIGIEKRSTKGVIVKPNQVGTISETFEFTNLARRNSIKLVTSHRSGETEDNFIAEFAVGIESDFIKTGAPARGERTSKYNKLLEIENKFGLEYGGKYFYL.

Gln-161 lines the (2R)-2-phosphoglycerate pocket. The Proton donor role is filled by Glu-205. Mg(2+)-binding residues include Asp-240, Glu-283, and Asp-309. Lys-334, Arg-363, Ser-364, and Lys-385 together coordinate (2R)-2-phosphoglycerate. Lys-334 acts as the Proton acceptor in catalysis.

Belongs to the enolase family. Requires Mg(2+) as cofactor.

It is found in the cytoplasm. The protein localises to the secreted. The protein resides in the cell surface. It carries out the reaction (2R)-2-phosphoglycerate = phosphoenolpyruvate + H2O. The protein operates within carbohydrate degradation; glycolysis; pyruvate from D-glyceraldehyde 3-phosphate: step 4/5. Functionally, catalyzes the reversible conversion of 2-phosphoglycerate (2-PG) into phosphoenolpyruvate (PEP). It is essential for the degradation of carbohydrates via glycolysis. The protein is Enolase of Saccharolobus islandicus (strain L.S.2.15 / Lassen #1) (Sulfolobus islandicus).